Reading from the N-terminus, the 500-residue chain is ATP synthase subunit alpha, sodium ion specific (500 aa).

ATP is bound at residue 169–176 (GDRQTGKT).

Belongs to the ATPase alpha/beta chains family. In terms of assembly, F-type ATPases have 2 components, CF(1) - the catalytic core - and CF(0) - the membrane proton channel. CF(1) has five subunits: alpha(3), beta(3), gamma(1), delta(1), epsilon(1). CF(0) has three main subunits: a, b and c.

The protein resides in the cell membrane. The catalysed reaction is 4 Na(+)(in) + ATP + H2O = 4 Na(+)(out) + ADP + phosphate + H(+). In terms of biological role, produces ATP from ADP in the presence of a sodium ion gradient across the membrane. The alpha chain is a regulatory subunit. This is ATP synthase subunit alpha, sodium ion specific from Propionigenium modestum.